Here is a 363-residue protein sequence, read N- to C-terminus: Proline/serine-rich coiled-coil protein 1 (363 aa).

S22 carries the post-translational modification Phosphoserine. Copy 1 of the repeat occupies 38 to 41 (PEKP). Residues 39-67 (EKPLRRGLSHRSDPNAVAPAPQGVRLSLG) are disordered. Phosphoserine is present on L42. The residue at position 45 (G45) is a Phosphothreonine. A phosphoserine mark is found at S47, S65, S70, S98, S122, and S140. The stretch at 68–71 (PLSP) is repeat 2. A coiled-coil region spans residues 70–94 (SPEKLEEILDEANRLAAQLEQCALQ). Positions 95–363 (DRESAGEGLG…RKVAVPGPTR (269 aa)) are disordered. The segment at 103–246 (LGPRRVKPSP…HPSPPGPPTP (144 aa)) is 4 X 4 AA repeats of P-X-X-P. Over residues 112–124 (PRRETFVLKDSPV) the composition is skewed to basic and acidic residues. The span at 133-148 (SLTRSTPSPSSLTPRL) shows a compositional bias: low complexity. At T145 the chain carries Phosphothreonine. A phosphoserine mark is found at S186 and S190. Residues 186–196 (SPASSPLTRST) show a composition bias toward polar residues. Residues 197–210 (PPVRGRAGPSGRAA) show a composition bias toward low complexity. S212 bears the Phosphoserine mark. The residue at position 215 (T215) is a Phosphothreonine. 2 consecutive repeat copies span residues 238–241 (PSPP) and 243–246 (PPTP).

Belongs to the PSRC1 family. As to quaternary structure, interacts with APC2. Interacts with KIF2A. Interacts with ANKRD53; recruits ANKRD53 to the spindle during mitosis. Post-translationally, phosphorylated during mitosis. In terms of tissue distribution, widely expressed in adult and fetal tissues, with highest expression in the adult brain and fetal thymus. Not detected in adult skeletal muscle.

The protein resides in the cytoplasm. It localises to the cytoskeleton. The protein localises to the spindle. It is found in the spindle pole. In terms of biological role, required for normal progression through mitosis. Required for normal congress of chromosomes at the metaphase plate, and for normal rate of chromosomal segregation during anaphase. Plays a role in the regulation of mitotic spindle dynamics. Increases the rate of turnover of microtubules on metaphase spindles, and contributes to the generation of normal tension across sister kinetochores. Recruits KIF2A and ANKRD53 to the mitotic spindle and spindle poles. May participate in p53/TP53-regulated growth suppression. This chain is Proline/serine-rich coiled-coil protein 1 (PSRC1), found in Homo sapiens (Human).